A 615-amino-acid polypeptide reads, in one-letter code: Zinc finger protein 653 (615 aa).

Disordered stretches follow at residues 1–46, 93–115, and 174–235; these read MAER…ARRR, RSGRHGKPWEQVPKKPKRKKRRR, and PLSD…SGLI. A compositionally biased stretch (low complexity) spans 7-25; sequence EPGAEAEAGAGGEAAAEEG. Over residues 106–115 the composition is skewed to basic residues; sequence KKPKRKKRRR. Low complexity-rich tracts occupy residues 192-203 and 212-232; these read GSSDSSSSGSSS and QPAKASAAAAALTPASPTGSS. 5 C2H2-type zinc fingers span residues 467–492, 498–522, 528–550, 556–578, and 586–609; these read FHCPYEGCSQVYVALSSFQNHVNLVH, KVCPHPGCGKKFYLSNHLRRHMIIH, FTCETCGKSFKRKNHLEVHRRTH, LQCEICGYQCRQRASLNWHMKKH, and FTCDRCGKRFEKLDSVKFHTLKSH.

The protein belongs to the krueppel C2H2-type zinc-finger protein family. As to quaternary structure, interacts with NR5A1. In terms of tissue distribution, highly expressed in testis and spleen. Moderately expressed in lung, adrenal gland, uterus, and ovary. Very low expression in pancreas, heart, skeletal muscle, adipose tissue, kidney, and liver.

The protein localises to the nucleus. Its function is as follows. Transcriptional repressor. May repress NR5A1, PPARG, NR1H3, NR4A2, ESR1 and NR3C1 transcriptional activity. The polypeptide is Zinc finger protein 653 (Znf653) (Mus musculus (Mouse)).